We begin with the raw amino-acid sequence, 393 residues long: Bifunctional enzyme Fae/Hps (393 aa).

The tract at residues 1–161 is formaldehyde-activating enzyme; it reads MYLVGEALIG…YEKDRAAHGI (161 aa). Catalysis depends on His-17, which acts as the Proton donor. Residues Asp-19, Leu-48, Lys-66, Thr-68, and Gln-83 each contribute to the substrate site. Positions 162-393 are 3-hexulose-6-phosphate synthase; sequence MGFKVQRLWD…IDQFRIMTDF (232 aa).

It in the N-terminal section; belongs to the formaldehyde-activating enzyme family. The protein in the C-terminal section; belongs to the HPS/KGPDC family. HPS subfamily.

It carries out the reaction 5,6,7,8-tetrahydromethanopterin + formaldehyde = 5,10-methylenetetrahydromethanopterin + H2O. It catalyses the reaction D-ribulose 5-phosphate + formaldehyde = D-arabino-hex-3-ulose 6-phosphate. Its pathway is carbohydrate biosynthesis; D-ribose 5-phosphate biosynthesis. Its function is as follows. Catalyzes the condensation of formaldehyde with tetrahydromethanopterin (H(4)MPT) to 5,10-methylenetetrahydromethanopterin. Catalyzes the reversible formation of ribulose-5-phosphate and formaldehyde from 3-hexulose-6-phosphate. The polypeptide is Bifunctional enzyme Fae/Hps (Methanoregula boonei (strain DSM 21154 / JCM 14090 / 6A8)).